A 118-amino-acid chain; its full sequence is Ribosome-binding factor A (118 aa).

It belongs to the RbfA family. Monomer. Binds 30S ribosomal subunits, but not 50S ribosomal subunits or 70S ribosomes.

It localises to the cytoplasm. One of several proteins that assist in the late maturation steps of the functional core of the 30S ribosomal subunit. Associates with free 30S ribosomal subunits (but not with 30S subunits that are part of 70S ribosomes or polysomes). Required for efficient processing of 16S rRNA. May interact with the 5'-terminal helix region of 16S rRNA. This chain is Ribosome-binding factor A, found in Dehalococcoides mccartyi (strain ATCC BAA-2100 / JCM 16839 / KCTC 5957 / BAV1).